Reading from the N-terminus, the 328-residue chain is Carbonic anhydrase-related protein 11 (328 aa).

A signal peptide spans 1–23 (MGAAPRLSAPRVLVLWAALGAAA). Positions 33-303 (DWWSYKDNLQ…LAHRALRGNR (271 aa)) constitute an Alpha-carbonic anhydrase domain. A glycan (N-linked (GlcNAc...) asparagine) is linked at asparagine 118. The interval 300–328 (RGNRDPRHPERRCRGPNYRLHVDDVPHGL) is disordered. Over residues 319–328 (LHVDDVPHGL) the composition is skewed to basic and acidic residues.

It belongs to the alpha-carbonic anhydrase family.

Its subcellular location is the secreted. Does not have a catalytic activity. This chain is Carbonic anhydrase-related protein 11 (CA11), found in Ovis aries (Sheep).